The following is a 114-amino-acid chain: UPF0339 protein PM0519 (114 aa).

2 tandem repeats follow at residues 11-59 (AKDG…NFEV) and 62-110 (AKND…IKDL).

It belongs to the UPF0339 family. Duplicated subfamily.

This is UPF0339 protein PM0519 from Pasteurella multocida (strain Pm70).